Consider the following 110-residue polypeptide: Large ribosomal subunit protein uL22 (110 aa).

It belongs to the universal ribosomal protein uL22 family. Part of the 50S ribosomal subunit.

This protein binds specifically to 23S rRNA; its binding is stimulated by other ribosomal proteins, e.g. L4, L17, and L20. It is important during the early stages of 50S assembly. It makes multiple contacts with different domains of the 23S rRNA in the assembled 50S subunit and ribosome. Its function is as follows. The globular domain of the protein is located near the polypeptide exit tunnel on the outside of the subunit, while an extended beta-hairpin is found that lines the wall of the exit tunnel in the center of the 70S ribosome. The polypeptide is Large ribosomal subunit protein uL22 (Actinobacillus pleuropneumoniae serotype 5b (strain L20)).